Here is a 1322-residue protein sequence, read N- to C-terminus: Transcription elongation factor SPT6-like (1322 aa).

Residues 1–17 show a composition bias toward basic and acidic residues; the sequence is MNRIDEEPQIHEDPVEN. Disordered regions lie at residues 1-65 and 90-113; these read MNRI…KKDE and KRLK…DLSH. A compositionally biased stretch (acidic residues) spans 18-33; that stretch reads REEDDEDEDDQYEFDD. Residues 48 to 65 are compositionally biased toward basic and acidic residues; sequence EQRHCSEKKSRSRRKKDE. The span at 97–110 shows a compositional bias: acidic residues; the sequence is EEEDKINNDDDDDD. Positions 1017–1088 constitute an S1 motif domain; sequence GRIVQATVKK…QRYHVLLVCK (72 aa).

Belongs to the SPT6 family.

The protein localises to the nucleus. Its function is as follows. Transcription elongation factor that enhances the transcription elongation by RNA polymerase II (RNAPII). This chain is Transcription elongation factor SPT6-like, found in Arabidopsis thaliana (Mouse-ear cress).